We begin with the raw amino-acid sequence, 207 residues long: LexA repressor (207 aa).

A DNA-binding region (H-T-H motif) is located at residues valine 28–serine 48. Residues serine 130 and lysine 168 each act as for autocatalytic cleavage activity in the active site.

Belongs to the peptidase S24 family. In terms of assembly, homodimer.

It catalyses the reaction Hydrolysis of Ala-|-Gly bond in repressor LexA.. Represses a number of genes involved in the response to DNA damage (SOS response), including recA and lexA. In the presence of single-stranded DNA, RecA interacts with LexA causing an autocatalytic cleavage which disrupts the DNA-binding part of LexA, leading to derepression of the SOS regulon and eventually DNA repair. This is LexA repressor from Staphylococcus aureus (strain Newman).